The primary structure comprises 575 residues: Arginine--tRNA ligase (575 aa).

Residues 136–146 carry the 'HIGH' region motif; sequence ANPTGPLHVGH.

Belongs to the class-I aminoacyl-tRNA synthetase family. In terms of assembly, monomer.

It localises to the cytoplasm. It carries out the reaction tRNA(Arg) + L-arginine + ATP = L-arginyl-tRNA(Arg) + AMP + diphosphate. This Polynucleobacter necessarius subsp. necessarius (strain STIR1) protein is Arginine--tRNA ligase.